The sequence spans 423 residues: Gamma-glutamyl phosphate reductase (423 aa).

The protein belongs to the gamma-glutamyl phosphate reductase family.

It localises to the cytoplasm. The enzyme catalyses L-glutamate 5-semialdehyde + phosphate + NADP(+) = L-glutamyl 5-phosphate + NADPH + H(+). Its pathway is amino-acid biosynthesis; L-proline biosynthesis; L-glutamate 5-semialdehyde from L-glutamate: step 2/2. Functionally, catalyzes the NADPH-dependent reduction of L-glutamate 5-phosphate into L-glutamate 5-semialdehyde and phosphate. The product spontaneously undergoes cyclization to form 1-pyrroline-5-carboxylate. The protein is Gamma-glutamyl phosphate reductase of Burkholderia pseudomallei (strain 1710b).